Here is a 555-residue protein sequence, read N- to C-terminus: MPYIITQSCCNDGSCVFACPVNCIHPTPDEPGFATSEMLYIDPVACVDCGACVSACPVGAIASDTRLAPKQLPFIEINASYYPARPIDLKLPPTSKLAPVIPAAQVHVRRRPLTVAIVGSGPAAMYAADELLTQPGVWVNVFEKLPTPYGLVRAGLAPDHQNTKKVTELFDRVAEHRRFRFFLNVEIGRHLSHDELLAHHHAVLYAVGAPDDRRLNIDGMGIPGTGTATELVAWINAHPDFAYLPVDLSHERVVVIGNGNVALDVARLLTADPDNLARTDISEFALHVLGGSAVREVVVAARRGPAHSAFTLPELIGLKATSEVVLDAGDRKLVEGDFATVSDSLTRKKLEVLSSLVDSSKPTSRRRIRLAYQLTPKRVLGNQRATGVEFSVTGTEESRRFDAGLVLTSVGYRGKRIRDLPFDEEAAVIPNDGGRVVDPSRGRPMPGAYVAGWIKRGPTGFIGTNKLCSVQTVQAVVADFNAGWLTDPVAEPAELAKLVHARQPDTVDSVGWRAIDAAEIAQGSTEGRPRRKFTDVADMLAVAAGAPPLRLRALS.

4Fe-4S ferredoxin-type domains lie at 2–29 and 37–66; these read PYIITQSCCNDGSCVFACPVNCIHPTPD and EMLYIDPVACVDCGACVSACPVGAIASDTR. Residues Cys-9, Cys-15, Cys-19, Cys-46, Cys-49, Cys-52, and Cys-56 each contribute to the [4Fe-4S] cluster site. Positions 115–555 are ferredoxin--NADP reductase; the sequence is VAIVGSGPAA…APPLRLRALS (441 aa). Residues Ala-123, Glu-143, Leu-151, and Ile-187 each contribute to the FAD site. Residues Arg-213, 258 to 261, 302 to 303, and Glu-314 each bind NADP(+); these read NGNV and RR. Residues Trp-453 and 460–462 contribute to the FAD site; that span reads GFI. Gly-460 contributes to the NADP(+) binding site.

The protein in the C-terminal section; belongs to the ferredoxin--NADP reductase family. [4Fe-4S] cluster serves as cofactor. FAD is required as a cofactor.

The enzyme catalyses 2 reduced [2Fe-2S]-[ferredoxin] + NADP(+) + H(+) = 2 oxidized [2Fe-2S]-[ferredoxin] + NADPH. This Mycobacterium leprae (strain TN) protein is Probable ferredoxin/ferredoxin--NADP reductase (fprB).